The primary structure comprises 252 residues: Probable endonuclease 4 (252 aa).

The Zn(2+) site is built by H56, H96, E129, D162, H165, H191, D204, H206, and E233.

It belongs to the AP endonuclease 2 family. Zn(2+) serves as cofactor.

The catalysed reaction is Endonucleolytic cleavage to 5'-phosphooligonucleotide end-products.. Its function is as follows. Endonuclease IV plays a role in DNA repair. It cleaves phosphodiester bonds at apurinic or apyrimidinic (AP) sites, generating a 3'-hydroxyl group and a 5'-terminal sugar phosphate. The protein is Probable endonuclease 4 of Mycobacterium marinum (strain ATCC BAA-535 / M).